The primary structure comprises 360 residues: Methylthioribose-1-phosphate isomerase (360 aa).

Catalysis depends on Asp246, which acts as the Proton donor.

Belongs to the eIF-2B alpha/beta/delta subunits family. MtnA subfamily.

Its subcellular location is the cytoplasm. The protein localises to the nucleus. The enzyme catalyses 5-(methylsulfanyl)-alpha-D-ribose 1-phosphate = 5-(methylsulfanyl)-D-ribulose 1-phosphate. It participates in amino-acid biosynthesis; L-methionine biosynthesis via salvage pathway; L-methionine from S-methyl-5-thio-alpha-D-ribose 1-phosphate: step 1/6. Functionally, catalyzes the interconversion of methylthioribose-1-phosphate (MTR-1-P) into methylthioribulose-1-phosphate (MTRu-1-P). The polypeptide is Methylthioribose-1-phosphate isomerase (Aedes aegypti (Yellowfever mosquito)).